The sequence spans 193 residues: Probable chemoreceptor glutamine deamidase CheD 1 (193 aa).

A disordered region spans residues Met1–Ala26.

This sequence belongs to the CheD family.

The catalysed reaction is L-glutaminyl-[protein] + H2O = L-glutamyl-[protein] + NH4(+). Functionally, probably deamidates glutamine residues to glutamate on methyl-accepting chemotaxis receptors (MCPs), playing an important role in chemotaxis. The sequence is that of Probable chemoreceptor glutamine deamidase CheD 1 from Chromobacterium violaceum (strain ATCC 12472 / DSM 30191 / JCM 1249 / CCUG 213 / NBRC 12614 / NCIMB 9131 / NCTC 9757 / MK).